A 289-amino-acid polypeptide reads, in one-letter code: Syntaxin-2 (289 aa).

At methionine 1 to lysine 265 the chain is on the cytoplasmic side. The stretch at glutamate 68–aspartate 101 forms a coiled coil. Residues leucine 192–alanine 254 enclose the t-SNARE coiled-coil homology domain. The helical; Anchor for type IV membrane protein transmembrane segment at tryptophan 266–lysine 289 threads the bilayer.

It belongs to the syntaxin family. Interacts with SYT6 and SYT8; the interaction is Ca(2+)-dependent.

It localises to the membrane. Essential for epithelial morphogenesis. May mediate Ca(2+)-regulation of exocytosis acrosomal reaction in sperm. This chain is Syntaxin-2 (Stx2), found in Mus musculus (Mouse).